The chain runs to 341 residues: Methionine import ATP-binding protein MetN 2 (341 aa).

An ABC transporter domain is found at 2–241 (IKLNQIVKRY…PQHEVTKRFV (240 aa)). An ATP-binding site is contributed by 38 to 45 (GFSGAGKS).

It belongs to the ABC transporter superfamily. Methionine importer (TC 3.A.1.24) family. The complex is composed of two ATP-binding proteins (MetN), two transmembrane proteins (MetI) and a solute-binding protein (MetQ).

It localises to the cell membrane. The catalysed reaction is L-methionine(out) + ATP + H2O = L-methionine(in) + ADP + phosphate + H(+). It carries out the reaction D-methionine(out) + ATP + H2O = D-methionine(in) + ADP + phosphate + H(+). Part of the ABC transporter complex MetNIQ involved in methionine import. Responsible for energy coupling to the transport system. This is Methionine import ATP-binding protein MetN 2 from Staphylococcus epidermidis (strain ATCC 35984 / DSM 28319 / BCRC 17069 / CCUG 31568 / BM 3577 / RP62A).